The following is a 107-amino-acid chain: Small ribosomal subunit protein bS18c (107 aa).

The segment covering 85 to 95 (KKAQRFKRRQS) has biased composition (basic residues). The segment at 85–107 (KKAQRFKRRQSTARTVGLRTRNK) is disordered.

This sequence belongs to the bacterial ribosomal protein bS18 family. As to quaternary structure, part of the 30S ribosomal subunit.

It localises to the plastid. The protein localises to the chloroplast. The chain is Small ribosomal subunit protein bS18c from Oenothera argillicola (Appalachian evening primrose).